The following is a 280-amino-acid chain: Phosphate import ATP-binding protein PstB (280 aa).

In terms of domain architecture, ABC transporter spans 34–275 (IEVKNLNFFY…PARKETEDYI (242 aa)). ATP is bound at residue 66-73 (GPSGCGKS).

It belongs to the ABC transporter superfamily. Phosphate importer (TC 3.A.1.7) family. The complex is composed of two ATP-binding proteins (PstB), two transmembrane proteins (PstC and PstA) and a solute-binding protein (PstS).

It is found in the cell inner membrane. The catalysed reaction is phosphate(out) + ATP + H2O = ADP + 2 phosphate(in) + H(+). Part of the ABC transporter complex PstSACB involved in phosphate import. Responsible for energy coupling to the transport system. The polypeptide is Phosphate import ATP-binding protein PstB (Burkholderia mallei (strain ATCC 23344)).